Reading from the N-terminus, the 229-residue chain is MFDVLPVEIWIIILDYLKSDKYNLYLVNKQFLSISLMNKVCDNELIITTIKTTNILALKLLIDYYNQESILDYALYFSCGIGNVRIIKEMIPDNYIGTEKLIFAAIQNDQDSVIDFFASRGFDLRINNDYLLRLAAEMNSLKTAKYLVSKGANCQAYNNAPLQKASINGHFEMVKFLVENGASVAAKKSYAIKKAKLYGHNNIVEYLEAKLIEIVGEKIFLEYFKPKYS.

4 ANK repeats span residues 70-95, 96-126, 127-156, and 157-186; these read ILDY…PDNY, IGTE…DLRI, NNDY…NCQA, and YNNA…SVAA.

The sequence is that of Putative ankyrin repeat protein L148 from Acanthamoeba polyphaga (Amoeba).